Here is a 207-residue protein sequence, read N- to C-terminus: Large ribosomal subunit protein uL4 (207 aa).

A disordered region spans residues 56-76; sequence EVRGGGRKPWRQKGTGRARAG. Over residues 60–71 the composition is skewed to basic residues; sequence GGRKPWRQKGTG.

This sequence belongs to the universal ribosomal protein uL4 family. In terms of assembly, part of the 50S ribosomal subunit.

Functionally, one of the primary rRNA binding proteins, this protein initially binds near the 5'-end of the 23S rRNA. It is important during the early stages of 50S assembly. It makes multiple contacts with different domains of the 23S rRNA in the assembled 50S subunit and ribosome. Forms part of the polypeptide exit tunnel. This is Large ribosomal subunit protein uL4 from Desulfitobacterium hafniense (strain DSM 10664 / DCB-2).